Here is a 357-residue protein sequence, read N- to C-terminus: Aspartate carbamoyltransferase catalytic subunit (357 aa).

The segment covering 1–17 (MSNSIDSQSIPTISPTD) has biased composition (polar residues). Residues 1–21 (MSNSIDSQSIPTISPTDYTKF) form a disordered region. Residues Arg97 and Thr98 each contribute to the carbamoyl phosphate site. Lys125 provides a ligand contact to L-aspartate. Carbamoyl phosphate-binding residues include Arg147, His177, and Gln180. Positions 211 and 266 each coordinate L-aspartate. Residues Gly307 and Pro308 each contribute to the carbamoyl phosphate site.

Belongs to the aspartate/ornithine carbamoyltransferase superfamily. ATCase family. In terms of assembly, heterododecamer (2C3:3R2) of six catalytic PyrB chains organized as two trimers (C3), and six regulatory PyrI chains organized as three dimers (R2).

It carries out the reaction carbamoyl phosphate + L-aspartate = N-carbamoyl-L-aspartate + phosphate + H(+). Its pathway is pyrimidine metabolism; UMP biosynthesis via de novo pathway; (S)-dihydroorotate from bicarbonate: step 2/3. Catalyzes the condensation of carbamoyl phosphate and aspartate to form carbamoyl aspartate and inorganic phosphate, the committed step in the de novo pyrimidine nucleotide biosynthesis pathway. In Psychrobacter arcticus (strain DSM 17307 / VKM B-2377 / 273-4), this protein is Aspartate carbamoyltransferase catalytic subunit.